The following is a 229-amino-acid chain: Non-structural protein P8 (229 aa).

Transmembrane regions (helical) follow at residues 119–139 and 162–182; these read IIHMTLLIAAVVALLTSVCTL and SLNPMLGVVNLGATFLMMVCA.

The protein belongs to the orbivirus NS3 family. Forms homooligomers via coiled-coil motif. Interacts with host OPTN; this interaction inhibits innate immune response.

Its subcellular location is the host cell membrane. It is found in the host Golgi apparatus. Plays a role in the inhibition of host innate immune response. Interacts with host OPTN and thus inhibits the recruitment of TBK1 to the host Golgi apparatus. In turn, downstream partner IRF3 cannot be activated and IFN-beta production is impaired. In terms of biological role, facilitates viral particle release either by increasing plasma membrane permeability through a viroporin-like activity or by viral budding. The protein is Non-structural protein P8 (Segment-10) of Antilocapra americana (Pronghorn).